We begin with the raw amino-acid sequence, 685 residues long: DNA ligase (685 aa).

NAD(+) contacts are provided by residues Asp-47–Asp-51, Ser-96–Leu-97, and Glu-125. Lys-127 (N6-AMP-lysine intermediate) is an active-site residue. NAD(+)-binding residues include Arg-148, Glu-185, Lys-304, and Lys-328. Zn(2+) contacts are provided by Cys-422, Cys-425, Cys-440, and Cys-446. The BRCT domain occupies Ala-605–Arg-685.

It belongs to the NAD-dependent DNA ligase family. LigA subfamily. Requires Mg(2+) as cofactor. The cofactor is Mn(2+).

It carries out the reaction NAD(+) + (deoxyribonucleotide)n-3'-hydroxyl + 5'-phospho-(deoxyribonucleotide)m = (deoxyribonucleotide)n+m + AMP + beta-nicotinamide D-nucleotide.. In terms of biological role, DNA ligase that catalyzes the formation of phosphodiester linkages between 5'-phosphoryl and 3'-hydroxyl groups in double-stranded DNA using NAD as a coenzyme and as the energy source for the reaction. It is essential for DNA replication and repair of damaged DNA. The protein is DNA ligase of Shewanella putrefaciens (strain CN-32 / ATCC BAA-453).